Reading from the N-terminus, the 199-residue chain is Recombination protein RecR (199 aa).

The C4-type zinc-finger motif lies at 57–72; sequence CQACRTFTEETLCPIC. The Toprim domain maps to 81 to 176; the sequence is EVICVVETPA…SVSRIAHGVP (96 aa).

It belongs to the RecR family.

Its function is as follows. May play a role in DNA repair. It seems to be involved in an RecBC-independent recombinational process of DNA repair. It may act with RecF and RecO. The protein is Recombination protein RecR of Shewanella woodyi (strain ATCC 51908 / MS32).